The chain runs to 532 residues: 56 kDa type-specific antigen (532 aa).

The first 22 residues, 1-22, serve as a signal peptide directing secretion; sequence MKKIMLIASAMSALSLPFSASA. Residues 67-87 form a helical membrane-spanning segment; sequence LTTGLPFGGTLAAGMTIAPGF. Disordered regions lie at residues 113-140 and 400-426; these read KGEIKADSGGGTDAPIRKPFKLTPPQPT and QQEEDAKNQGKGDCKQQQGASEKSKEG. Over residues 403–413 the composition is skewed to basic and acidic residues; it reads EDAKNQGKGDC. Residues 480–500 form a helical membrane-spanning segment; that stretch reads TGMVASGALGVAINAAEGVCV.

It is found in the cell membrane. May be an adherent factor for rickettsial adsorption to the host-cell surface and a determinant of virulence of individual rickettsial strain. It is the major outer membrane protein. This Orientia tsutsugamushi (Rickettsia tsutsugamushi) protein is 56 kDa type-specific antigen.